Here is a 444-residue protein sequence, read N- to C-terminus: ATP-dependent protease ATPase subunit HslU (444 aa).

Residues Ile20 and 62 to 67 each bind ATP; that span reads GVGKTE. A disordered region spans residues 130–158; that stretch reads EDRILDALVPPPRGASGEPERGEDNSARQ. Residues Asp257, Glu322, and Arg394 each coordinate ATP.

It belongs to the ClpX chaperone family. HslU subfamily. In terms of assembly, a double ring-shaped homohexamer of HslV is capped on each side by a ring-shaped HslU homohexamer. The assembly of the HslU/HslV complex is dependent on binding of ATP.

The protein localises to the cytoplasm. ATPase subunit of a proteasome-like degradation complex; this subunit has chaperone activity. The binding of ATP and its subsequent hydrolysis by HslU are essential for unfolding of protein substrates subsequently hydrolyzed by HslV. HslU recognizes the N-terminal part of its protein substrates and unfolds these before they are guided to HslV for hydrolysis. The chain is ATP-dependent protease ATPase subunit HslU from Bordetella parapertussis (strain 12822 / ATCC BAA-587 / NCTC 13253).